Consider the following 376-residue polypeptide: Zinc-regulated transporter 1 (376 aa).

At 1-50 the chain is on the extracellular side; that stretch reads MSNVTTPWWKQWDPSEVTLADKTPDDVWKTCVLQGVYFGGNEYNGNLGAR. The chain crosses the membrane as a helical span at residues 51–71; it reads ISSVFVILFVSTFFTMFPLIS. Topologically, residues 72–80 are cytoplasmic; sequence TKVKRLRIP. The helical transmembrane segment at 81–101 threads the bilayer; sequence LYVYLFAKYFGSGVIVATAFI. Over 102–122 the chain is Extracellular; that stretch reads HLMDPAYGAIGGTTCVGQTGN. A helical membrane pass occupies residues 123–143; that stretch reads WGLYSWCPAIMLTSLTFTFLT. Residues 144–216 are Cytoplasmic-facing; that stretch reads DLFSSVWVER…TSMDVVQSFQ (73 aa). Polar residues predominate over residues 177-191; the sequence is VSSENDNENGTANGS. The segment at 177–196 is disordered; that stretch reads VSSENDNENGTANGSHDTKN. Residues 217–237 traverse the membrane as a helical segment; it reads AQFYAFLILEFGVIFHSVMIG. At 238-242 the chain is on the extracellular side; it reads LNLGS. The chain crosses the membrane as a helical span at residues 243-263; the sequence is VGDEFSSLYPVLVFHQSFEGL. Residues 264–278 are Cytoplasmic-facing; sequence GIGARLSAIEFPRSK. The helical transmembrane segment at 279–299 threads the bilayer; sequence RWWPWALCVAYGLTTPICVAI. Over 300–310 the chain is Extracellular; that stretch reads GLGVRTRYVSG. Residues 311 to 331 traverse the membrane as a helical segment; the sequence is SYTALVISGVLDAISAGILLY. Over 332-354 the chain is Cytoplasmic; sequence TGLVELLARDFIFNPQRTKDLRE. The helical transmembrane segment at 355-375 threads the bilayer; that stretch reads LSFNVICTLFGAGIMALIGKW. Alanine 376 is a topological domain (extracellular).

This sequence belongs to the ZIP transporter (TC 2.A.5) family.

The protein resides in the membrane. Its function is as follows. High-affinity zinc transport protein. This Saccharomyces cerevisiae (strain ATCC 204508 / S288c) (Baker's yeast) protein is Zinc-regulated transporter 1 (ZRT1).